The sequence spans 97 residues: Cytochrome c2 iso-2 (97 aa).

Residues Cys-10, Cys-13, His-14, and Met-75 each coordinate heme c.

This sequence belongs to the cytochrome c family. Binds 1 heme c group covalently per subunit.

Its function is as follows. Cytochrome c2 is found mainly in purple, non-sulfur, photosynthetic bacteria where it functions as the electron donor to the oxidized bacteriochlorophyll in the photophosphorylation pathway. However, it may also have a role in the respiratory chain and is found in some non-photosynthetic bacteria. This is Cytochrome c2 iso-2 from Magnetospirillum molischianum (Rhodospirillum molischianum).